We begin with the raw amino-acid sequence, 212 residues long: ATP synthase subunit 5, mitochondrial (212 aa).

The N-terminal 17 residues, 1–17 (MFNRVFTRSFASSLRAA), are a transit peptide targeting the mitochondrion.

This sequence belongs to the ATPase delta chain family. F-type ATPases have 2 components, CF(1) - the catalytic core - and CF(0) - the membrane proton channel. CF(1) has five subunits: alpha(3), beta(3), gamma(1), delta(1), epsilon(1). CF(0) has three main subunits: a, b and c.

The protein resides in the mitochondrion. It localises to the mitochondrion inner membrane. Its function is as follows. Mitochondrial membrane ATP synthase (F(1)F(0) ATP synthase or Complex V) produces ATP from ADP in the presence of a proton gradient across the membrane which is generated by electron transport complexes of the respiratory chain. F-type ATPases consist of two structural domains, F(1) - containing the extramembraneous catalytic core and F(0) - containing the membrane proton channel, linked together by a central stalk and a peripheral stalk. During catalysis, ATP synthesis in the catalytic domain of F(1) is coupled via a rotary mechanism of the central stalk subunits to proton translocation. Part of the complex F(0) domain and the peripheric stalk, which acts as a stator to hold the catalytic alpha(3)beta(3) subcomplex and subunit a/ATP6 static relative to the rotary elements. In Saccharomyces cerevisiae (strain ATCC 204508 / S288c) (Baker's yeast), this protein is ATP synthase subunit 5, mitochondrial (ATP5).